The sequence spans 457 residues: RuvB-like helicase 1 (457 aa).

Residue 72 to 79 (GAPGTGKT) participates in ATP binding.

It belongs to the RuvB family. May form heterododecamers with RVB2. Component of the SWR1 chromatin remodeling complex, the INO80 chromatin remodeling complex, and of the R2TP complex.

It is found in the nucleus. The catalysed reaction is ATP + H2O = ADP + phosphate + H(+). DNA helicase which participates in several chromatin remodeling complexes, including the SWR1 and the INO80 complexes. The SWR1 complex mediates the ATP-dependent exchange of histone H2A for the H2A variant HZT1 leading to transcriptional regulation of selected genes by chromatin remodeling. The INO80 complex remodels chromatin by shifting nucleosomes and is involved in DNA repair. Also involved in pre-rRNA processing. This Debaryomyces hansenii (strain ATCC 36239 / CBS 767 / BCRC 21394 / JCM 1990 / NBRC 0083 / IGC 2968) (Yeast) protein is RuvB-like helicase 1 (RBV1).